Reading from the N-terminus, the 416-residue chain is Methylthioribose-1-phosphate isomerase (416 aa).

Residue aspartate 280 is the Proton donor of the active site.

It belongs to the eIF-2B alpha/beta/delta subunits family. MtnA subfamily.

The protein localises to the cytoplasm. The protein resides in the nucleus. The enzyme catalyses 5-(methylsulfanyl)-alpha-D-ribose 1-phosphate = 5-(methylsulfanyl)-D-ribulose 1-phosphate. It participates in amino-acid biosynthesis; L-methionine biosynthesis via salvage pathway; L-methionine from S-methyl-5-thio-alpha-D-ribose 1-phosphate: step 1/6. Catalyzes the interconversion of methylthioribose-1-phosphate (MTR-1-P) into methylthioribulose-1-phosphate (MTRu-1-P). The protein is Methylthioribose-1-phosphate isomerase of Candida albicans (strain SC5314 / ATCC MYA-2876) (Yeast).